The following is a 780-amino-acid chain: Dynamin-related protein 3B (780 aa).

Ser-2 is subject to N-acetylserine. The 276-residue stretch at 40 to 315 folds into the Dynamin-type G domain; that stretch reads TIALPQVAVV…LVQHIKALLP (276 aa). Residues 50–57 are G1 motif; it reads GSQSSGKS. 50–57 contributes to the GTP binding site; sequence GSQSSGKS. The G2 motif stretch occupies residues 76-78; it reads CTR. A G3 motif region spans residues 157 to 160; that stretch reads DLPG. GTP-binding positions include 157–161 and 226–229; these read DLPGI and TKLD. The tract at residues 226–229 is G4 motif; that stretch reads TKLD. Positions 256-259 are G5 motif; that stretch reads VNRS. 2 disordered regions span residues 536–558 and 573–592; these read PVAR…QIKT and QAVP…STSW. Residues 539–548 show a composition bias toward basic and acidic residues; it reads RPRDTVEPER. Polar residues predominate over residues 549-558; sequence TASSGSQIKT. The GED domain maps to 654–745; sequence IEITKLLLKS…TLDELPLEAE (92 aa). The span at 753–770 shows a compositional bias: basic and acidic residues; sequence IGSEAKHEELPGTRRSRT. The interval 753 to 780 is disordered; it reads IGSEAKHEELPGTRRSRTETNGNGRLHM. Over residues 771–780 the composition is skewed to polar residues; it reads ETNGNGRLHM.

This sequence belongs to the TRAFAC class dynamin-like GTPase superfamily. Dynamin/Fzo/YdjA family. As to quaternary structure, interacts with ARC5 on peroxisomes and ELM1 on mitochondria.

It is found in the mitochondrion. The protein localises to the peroxisome. Its function is as follows. Involved in the control of mitochondrial and peroxisomal division and morphology. This chain is Dynamin-related protein 3B (DRP3B), found in Arabidopsis thaliana (Mouse-ear cress).